A 108-amino-acid polypeptide reads, in one-letter code: ADM5 (108 aa).

The N-terminal stretch at 1 to 18 is a signal peptide; sequence MTAHILLLWLFASSILGD. A propeptide spanning residues 19–25 is cleaved from the precursor; that stretch reads PDSAGRL. A disulfide bridge links cysteine 38 with cysteine 43. The disordered stretch occupies residues 61 to 108; sequence KELSGKAGRKPQDPYSYGRRRRRRRRRREARLLRRLQDPSLRRAQLAG. At tyrosine 77 the chain carries Tyrosine amide. A compositionally biased stretch (basic residues) spans 78-89; the sequence is GRRRRRRRRRRE. Residues 89–108 constitute a propeptide that is removed on maturation; the sequence is EARLLRRLQDPSLRRAQLAG. A compositionally biased stretch (basic and acidic residues) spans 90 to 101; it reads ARLLRRLQDPSL.

Belongs to the adrenomedullin family. As to expression, expressed abundantly in the spleen and thymus. Also expressed in adrenal and pituitary. Not expressed in brain, heart, kidney, liver and stomach.

It is found in the secreted. Seems to have a peripheral vasodepressor effect and a central vasopressor effect. The protein is ADM5 (ADM5) of Sus scrofa (Pig).